Reading from the N-terminus, the 536-residue chain is Membrane protein insertase YidC (536 aa).

The helical transmembrane segment at 5–25 (ALIAVILSIVFFYGYSALFPP) threads the bilayer. The interval 30 to 54 (APAPSAQQAVTGSQPGAPQASVAAV) is disordered. A compositionally biased stretch (low complexity) spans 31–54 (PAPSAQQAVTGSQPGAPQASVAAV). 4 consecutive transmembrane segments (helical) span residues 350 to 370 (YGIAIIIITVILKIIFYPLTH), 420 to 440 (LPMLVQIPVFFALYKALMFSI), 454 to 474 (LAGKDPYYVTPIIMGITMVIQ), and 494 to 514 (PVVFTFMFLNFPSGLVLYWLV).

Belongs to the OXA1/ALB3/YidC family. Type 1 subfamily. In terms of assembly, interacts with the Sec translocase complex via SecD. Specifically interacts with transmembrane segments of nascent integral membrane proteins during membrane integration.

The protein localises to the cell inner membrane. In terms of biological role, required for the insertion and/or proper folding and/or complex formation of integral membrane proteins into the membrane. Involved in integration of membrane proteins that insert both dependently and independently of the Sec translocase complex, as well as at least some lipoproteins. Aids folding of multispanning membrane proteins. The chain is Membrane protein insertase YidC from Geobacter metallireducens (strain ATCC 53774 / DSM 7210 / GS-15).